The following is a 443-amino-acid chain: MDAWSRSLERLEAEFPPEDVHTWLKPLQADLRVDSLVLYAPNAFIVDQVRELYLARIRELLAHFAGFSDVFLEIGSRPRPVEAQNAPFSTPSAHVSSEPQVPFAGNLDNHYTFANFVEGRSNQLGLAAAFQAAQKPGDRAHNPLLLYGGTGLGKTHLMFAAGNAMRQANPGAKVLYLRSEQFFSAMIRALQEKTMDQFKRQFQQVDALLIDDIQFFAGKDRTQEEFFHTFNALFDGKQQIILTCDRYPREVEGLEARLKSRLAWGLSVAIEPPDFETRAAIVLAKARERGAEIPDDVAFLIAKKMRSNVRDLEGALNTLTARANFTGRAITTEFAQETLRDLLRAQQQAISIPNIQKTVADYYGLQIKDLLSKRRTRSLARPRQVAMALTKELTEHSLPEIGDAFAGRDHTTVLHACRQIRTLMEADGKLREDWDKLIRKLSE.

The interval 1 to 67 (MDAWSRSLER…RELLAHFAGF (67 aa)) is domain I, interacts with DnaA modulators. The tract at residues 67 to 105 (FSDVFLEIGSRPRPVEAQNAPFSTPSAHVSSEPQVPFAG) is domain II. The segment at 106–323 (NLDNHYTFAN…GALNTLTARA (218 aa)) is domain III, AAA+ region. Positions 151, 153, 154, and 155 each coordinate ATP. The segment at 324-443 (NFTGRAITTE…WDKLIRKLSE (120 aa)) is domain IV, binds dsDNA.

Belongs to the DnaA family. As to quaternary structure, oligomerizes as a right-handed, spiral filament on DNA at oriC.

It localises to the cytoplasm. Its function is as follows. Plays an essential role in the initiation and regulation of chromosomal replication. ATP-DnaA binds to the origin of replication (oriC) to initiate formation of the DNA replication initiation complex once per cell cycle. Binds the DnaA box (a 9 base pair repeat at the origin) and separates the double-stranded (ds)DNA. Forms a right-handed helical filament on oriC DNA; dsDNA binds to the exterior of the filament while single-stranded (ss)DNA is stabiized in the filament's interior. The ATP-DnaA-oriC complex binds and stabilizes one strand of the AT-rich DNA unwinding element (DUE), permitting loading of DNA polymerase. After initiation quickly degrades to an ADP-DnaA complex that is not apt for DNA replication. Binds acidic phospholipids. The sequence is that of Chromosomal replication initiator protein DnaA from Stenotrophomonas maltophilia (strain R551-3).